Here is a 159-residue protein sequence, read N- to C-terminus: 6,7-dimethyl-8-ribityllumazine synthase (159 aa).

5-amino-6-(D-ribitylamino)uracil-binding positions include Phe-22, 57-59 (AVE), and 81-83 (AVI). 86 to 87 (GT) is a (2S)-2-hydroxy-3-oxobutyl phosphate binding site. The active-site Proton donor is His-89. Position 114 (Phe-114) interacts with 5-amino-6-(D-ribitylamino)uracil. Arg-128 lines the (2S)-2-hydroxy-3-oxobutyl phosphate pocket.

This sequence belongs to the DMRL synthase family. In terms of assembly, forms an icosahedral capsid composed of 60 subunits, arranged as a dodecamer of pentamers.

It carries out the reaction (2S)-2-hydroxy-3-oxobutyl phosphate + 5-amino-6-(D-ribitylamino)uracil = 6,7-dimethyl-8-(1-D-ribityl)lumazine + phosphate + 2 H2O + H(+). It participates in cofactor biosynthesis; riboflavin biosynthesis; riboflavin from 2-hydroxy-3-oxobutyl phosphate and 5-amino-6-(D-ribitylamino)uracil: step 1/2. Functionally, catalyzes the formation of 6,7-dimethyl-8-ribityllumazine by condensation of 5-amino-6-(D-ribitylamino)uracil with 3,4-dihydroxy-2-butanone 4-phosphate. This is the penultimate step in the biosynthesis of riboflavin. This Shewanella denitrificans (strain OS217 / ATCC BAA-1090 / DSM 15013) protein is 6,7-dimethyl-8-ribityllumazine synthase.